The following is a 633-amino-acid chain: Probable potassium transport system protein Kup 2 (633 aa).

Helical transmembrane passes span 59–79 (ISAI…ILIM), 110–130 (ILLV…LTPA), 145–165 (TALQ…LFLF), 173–193 (IGAL…AAGI), 219–239 (GFAS…AEAL), 256–276 (FGLV…LIIV), 287–307 (LLYP…ATVI), 345–365 (IYIP…VLGF), 374–394 (AYGV…FFVI), 402–422 (LLLS…FVSS), and 429–449 (EGGW…LTWV).

It belongs to the HAK/KUP transporter (TC 2.A.72) family.

Its subcellular location is the cell inner membrane. The enzyme catalyses K(+)(in) + H(+)(in) = K(+)(out) + H(+)(out). Functionally, transport of potassium into the cell. Likely operates as a K(+):H(+) symporter. The sequence is that of Probable potassium transport system protein Kup 2 from Cupriavidus necator (strain ATCC 17699 / DSM 428 / KCTC 22496 / NCIMB 10442 / H16 / Stanier 337) (Ralstonia eutropha).